A 285-amino-acid polypeptide reads, in one-letter code: MAAASEPVDSGALWGLERPEPPPTRFHRVHGANIRVDPSGTRATRVESFAHGVCFSREPLAPGQVFLVEIEEKELGWCGHLRLGLTALDPASLAPVPEFSLPDLVNLGHTWVFAITRHHNRVPREGRPEAEAAAPSRPPTLLVEPYLRIEQFRIPRDRLVGRSRPGLYSHLLDQLYELNVLPPTARRSRLGVLFCPRPDGTADMHIIINGEDMGPSARGLPAAQPLYAVVDVFASTKSVRLVQLEYGLPSLQTLCRLVIQRSMVHRLAIDGLHLPKELKDFCKYE.

Positions 1-20 (MAAASEPVDSGALWGLERPE) are disordered. Positions 23–244 (PTRFHRVHGA…STKSVRLVQL (222 aa)) constitute an NHR domain. Residues 250-285 (SLQTLCRLVIQRSMVHRLAIDGLHLPKELKDFCKYE) form the SOCS box domain.

In terms of assembly, probable component the ECS(NEURL2) E3 ubiquitin-protein ligase complex consisting of ELOB/Elongin B, ELOC/Elongin C, CUL5, RBX1 and NEURL2. Interacts with CTNNB1. Expressed specifically in skeletal and cardiac muscles.

It localises to the cytoplasm. The protein operates within protein modification; protein ubiquitination. In terms of biological role, plays an important role in the process of myofiber differentiation and maturation. Probable substrate-recognition component of a SCF-like ECS (Elongin BC-CUL2/5-SOCS-box protein) E3 ubiquitin-protein ligase complex, which mediates the ubiquitination of proteins. Probably contributes to catalysis through recognition and positioning of the substrate and the ubiquitin-conjugating enzyme. During myogenesis, controls the ubiquitination and degradation of the specific pool of CTNNB1/beta-catenin located at the sarcolemma. The protein is Neuralized-like protein 2 (NEURL2) of Homo sapiens (Human).